Consider the following 195-residue polypeptide: MSSIKLIVGLANPGAEYAATRHNAGAWFVDRLADAYRQPLKEESKFFGYTSRLNLAGQDVRLLVPTTFMNLSGKAVAAMATFYRIQPDEILVAHDELDLLPGIAKLKLGGGHGGHNGLKDIISKLGNNPNFHRLRIGIGHPGDKSKVTGFVLGKPPTSEQTLIDDAIDEAVRCTEILMKEDMIKAMNRLHAFKPA.

Tyr17 provides a ligand contact to tRNA. His22 (proton acceptor) is an active-site residue. TRNA is bound by residues Phe68, Asn70, and Asn116.

It belongs to the PTH family. In terms of assembly, monomer.

The protein localises to the cytoplasm. The catalysed reaction is an N-acyl-L-alpha-aminoacyl-tRNA + H2O = an N-acyl-L-amino acid + a tRNA + H(+). In terms of biological role, hydrolyzes ribosome-free peptidyl-tRNAs (with 1 or more amino acids incorporated), which drop off the ribosome during protein synthesis, or as a result of ribosome stalling. Its function is as follows. Catalyzes the release of premature peptidyl moieties from peptidyl-tRNA molecules trapped in stalled 50S ribosomal subunits, and thus maintains levels of free tRNAs and 50S ribosomes. The sequence is that of Peptidyl-tRNA hydrolase from Pectobacterium carotovorum subsp. carotovorum (strain PC1).